A 698-amino-acid polypeptide reads, in one-letter code: Probable microcin-H47 secretion/processing ATP-binding protein MchF (698 aa).

A Peptidase C39 domain is found at 26-145; the sequence is QTETAECGLA…RYFTGIALEV (120 aa). C32 is an active-site residue. 5 helical membrane passes run 33-53, 90-110, 289-311, 315-337, and 397-417; these read GLAC…LISL, LGAL…VVLV, TCVV…MLLY, LTWI…YGYY, and LLFG…ILWL. The 283-residue stretch at 176 to 458 folds into the ABC transmembrane type-1 domain; sequence LAKIFCLSVV…LTSFLLQLRI (283 aa). Residues 492 to 698 enclose the ABC transporter domain; that stretch reads LETTDLSYRY…LRTVDRIISI (207 aa). 526 to 533 contributes to the ATP binding site; it reads GASGAGKT.

This sequence belongs to the ABC transporter superfamily.

It is found in the cell membrane. In terms of biological role, probably involved, in conjunction with MchE, in the secretion of microcin H47. The sequence is that of Probable microcin-H47 secretion/processing ATP-binding protein MchF (mchF) from Escherichia coli.